We begin with the raw amino-acid sequence, 210 residues long: MAGGIVAVPLLGFSLLAVALIIERAYFWSQIQLRQNRLVNDVLKLYRSNPPGAIAKLKQNADLPMARIFLEALCLEGATPTEFRLALESATQAELPLLKRFNTLFQTIITVSPLLGLLGTILGLMRSFSSMSLGSTTAANASGVTGGISEALVSTVMGLVVAIATLLFANVFRSLYLRQFALIQEQTGQIELVYRRFHDQPEEKEYATSR.

A run of 3 helical transmembrane segments spans residues 2 to 22 (AGGI…ALII), 104 to 124 (LFQT…ILGL), and 152 to 172 (LVST…ANVF).

Belongs to the ExbB/TolQ family.

It is found in the cell inner membrane. Involved in the TonB-dependent energy-dependent transport of various receptor-bound substrates. Protects ExbD from proteolytic degradation and functionally stabilizes TonB. This is Putative biopolymer transport protein ExbB-like 3 from Synechocystis sp. (strain ATCC 27184 / PCC 6803 / Kazusa).